The following is a 406-amino-acid chain: Kelch domain-containing protein 2 (406 aa).

6 Kelch repeats span residues 31-85, 92-136, 148-207, 221-259, 271-311, and 322-359; these read ERSG…NTEG, SGSC…ERID, LGVW…TWSQ, HACATVGNRGFVFGGRYRDARMNDLHYLNLDTWEWNELI, HSLT…IQFN, and HTACASDEGEVIVFGGCANNLLVHHRAAHSNEILIFSV.

As to quaternary structure, component of a CRL2(KLHDC2) E3 ubiquitin-protein ligase complex, also named ECS(KLHDC2) complex, composed of CUL2, Elongin BC (ELOB and ELOC), RBX1 and substrate-specific adapter KLHDC2. May form oligomers as a KLHDC2-ELOB-ELOC complex; this interaction is autoinhibitory for the E3 ligase complex as the substrate-binding site of KLHDC2 is blocked in the oligomer. Interacts with CREB3; interaction is direct and specific as it does not interact with CREB1, ATF4, ATF6, JUN, FOS, CEBPA or herpes simplex virus transactivator VP16. Post-translationally, autoubiquitinated by the CRL2(KLHDC2) E3 ligase complex. In terms of tissue distribution, widely expressed, with high levels in skeletal muscle, heart, pancreas and liver. Undetectable in peripheral blood leukocytes.

It is found in the nucleus. Its pathway is protein modification; protein ubiquitination. Its function is as follows. Substrate-recognition component of a Cul2-RING (CRL2) E3 ubiquitin-protein ligase complex of the DesCEND (destruction via C-end degrons) pathway, which recognizes a C-degron located at the extreme C terminus of target proteins, leading to their ubiquitination and degradation. The C-degron recognized by the DesCEND pathway is usually a motif of less than ten residues and can be present in full-length proteins, truncated proteins or proteolytically cleaved forms. The CRL2(KLHDC2) complex specifically recognizes proteins with a diglycine (Gly-Gly) at the C-terminus, leading to their ubiquitination and degradation. The CRL2(KLHDC2) complex mediates ubiquitination and degradation of truncated SELENOK and SELENOS selenoproteins produced by failed UGA/Sec decoding, which end with a diglycine. The CRL2(KLHDC2) complex also recognizes proteolytically cleaved proteins ending with Gly-Gly, such as the N-terminal fragment of USP1, leading to their degradation. May also act as an indirect repressor of CREB3-mediated transcription by interfering with CREB3-DNA-binding. This Homo sapiens (Human) protein is Kelch domain-containing protein 2.